Reading from the N-terminus, the 114-residue chain is Putative membrane protein insertion efficiency factor (114 aa).

Belongs to the UPF0161 family.

The protein localises to the cell inner membrane. Functionally, could be involved in insertion of integral membrane proteins into the membrane. In Nitrobacter hamburgensis (strain DSM 10229 / NCIMB 13809 / X14), this protein is Putative membrane protein insertion efficiency factor.